We begin with the raw amino-acid sequence, 152 residues long: SsrA-binding protein (152 aa).

Belongs to the SmpB family.

Its subcellular location is the cytoplasm. Its function is as follows. Required for rescue of stalled ribosomes mediated by trans-translation. Binds to transfer-messenger RNA (tmRNA), required for stable association of tmRNA with ribosomes. tmRNA and SmpB together mimic tRNA shape, replacing the anticodon stem-loop with SmpB. tmRNA is encoded by the ssrA gene; the 2 termini fold to resemble tRNA(Ala) and it encodes a 'tag peptide', a short internal open reading frame. During trans-translation Ala-aminoacylated tmRNA acts like a tRNA, entering the A-site of stalled ribosomes, displacing the stalled mRNA. The ribosome then switches to translate the ORF on the tmRNA; the nascent peptide is terminated with the 'tag peptide' encoded by the tmRNA and targeted for degradation. The ribosome is freed to recommence translation, which seems to be the essential function of trans-translation. This Helicobacter acinonychis (strain Sheeba) protein is SsrA-binding protein.